We begin with the raw amino-acid sequence, 328 residues long: L-lactate dehydrogenase (328 aa).

Residues V18, E39, K46, Y71, and 85 to 86 (GA) each bind NAD(+). Residues Q88 and R94 each coordinate substrate. Residues S107, 124–126 (AAN), and S149 each bind NAD(+). A substrate-binding site is contributed by 126-129 (NPVD). 154 to 157 (DSAR) serves as a coordination point for substrate. Residues R159 and H174 each coordinate beta-D-fructose 1,6-bisphosphate. The Proton acceptor role is filled by H181. The residue at position 226 (Y226) is a Phosphotyrosine. A substrate-binding site is contributed by T235.

This sequence belongs to the LDH/MDH superfamily. LDH family. In terms of assembly, homotetramer.

Its subcellular location is the cytoplasm. It catalyses the reaction (S)-lactate + NAD(+) = pyruvate + NADH + H(+). It functions in the pathway fermentation; pyruvate fermentation to lactate; (S)-lactate from pyruvate: step 1/1. With respect to regulation, allosterically activated by fructose 1,6-bisphosphate (FBP). Functionally, catalyzes the conversion of lactate to pyruvate. The chain is L-lactate dehydrogenase from Streptococcus pneumoniae (strain 70585).